The primary structure comprises 62 residues: Conotoxin Gm5.2 (62 aa).

Residues 1–22 (MRCLPVFVILLLLIASAPSVDA) form the signal peptide. Positions 23-49 (QPKTKDDVPLAPLHDNIRSTLQTLRKK) are excised as a propeptide. S60 is subject to Serine amide.

It belongs to the conotoxin T superfamily. In terms of processing, contains 2 disulfide bonds that can be either 'C1-C3, C2-C4' or 'C1-C4, C2-C3', since these disulfide connectivities have been observed for conotoxins with cysteine framework V (for examples, see AC P0DQQ7 and AC P81755). In terms of tissue distribution, expressed by the venom duct.

Its subcellular location is the secreted. The protein is Conotoxin Gm5.2 of Conus gloriamaris (Glory-of-the-Sea cone).